The chain runs to 318 residues: Taste receptor type 2 member 14 (318 aa).

At 1–7 (MGGVIKN) the chain is on the extracellular side. A helical transmembrane segment spans residues 8-28 (ISTFVLIVEFIIGNLGNSFIA). Residues 29-55 (LVNCIDWVKRRKISLVDQLLTALAISR) are Cytoplasmic-facing. Residues 56 to 76 (ISLVWLIFGSWCVSAFFPALF) traverse the membrane as a helical segment. The Extracellular segment spans residues 77-87 (ATEKMFRMLTN). Cholesterol is bound by residues threonine 86 and tryptophan 89. A helical membrane pass occupies residues 88–108 (IWAVTNHFSVWLATGLGTFYF). Over 109 to 129 (LKIANFSNSIFIYLKWRVKKV) the chain is Cytoplasmic. The helical transmembrane segment at 130-150 (VLVLLLVTSVFLFLNIALINI) threads the bilayer. At 151–184 (HINASINGYGGNKTCSSDSNDFTRFSSLIALTSS) the chain is on the extracellular side. N-linked (GlcNAc...) asparagine glycans are attached at residues asparagine 153 and asparagine 162. Alanine 180 provides a ligand contact to cholesterol. Residues 185–205 (VFIFIPFILSLAIFLLLTFSL) form a helical membrane-spanning segment. The Cytoplasmic segment spans residues 206–232 (WKHCKKMQHTVKASGDASTKAHRGVMQ). Residues 233 to 253 (TVIAFLLLYPIFSLSFFIAVW) traverse the membrane as a helical segment. Residues 254–261 (TSGWLEEN) are Extracellular-facing. A helical transmembrane segment spans residues 262–282 (LIILSQVMGMAYPSCHSCILI). Cholesterol contacts are provided by leucine 265 and valine 268. Over 283 to 317 (LGNKKLRQASLSVLWWLKYRFKDGEPSGHKGFRES) the chain is Cytoplasmic.

It belongs to the G-protein coupled receptor T2R family. As to quaternary structure, core component of the TAS2R14-GNAI1 complex, consisting of TAS2R14, GNAI1, GNB1 and GNG2; within the complex interacts with GNAI1. Core component of the TAS2R14-GNAT3 complex, consisting of TAS2R14, GNAT3, GNB1 and GNG2; within the complex interacts with GNAT3. Core component of the TAS2R14-GNAS2 complex, consisting of TAS2R14, GNAS2, GNB1 and GNG2; within the complex interacts with GNAS2.

Its subcellular location is the membrane. It catalyses the reaction Ca(2+)(in) = Ca(2+)(out). The catalysed reaction is 3',5'-cyclic AMP(in) = 3',5'-cyclic AMP(out). With respect to regulation, basal activity is enhanced by binding to bitter tastants, such as flufenamic acid and aristolochic acid. Regulated by cholesterol in a concentration-dependent manner. Gustducin-linked G-protein coupled receptor that plays a role in the perception of bitterness. The activity of this receptor stimulates GNAT3, activating the gustducin G-protein pathway. Likely plays a role in sensing the chemical composition of the gastrointestinal content and other extra-oral tissues via the inhibitory G-protein pathways. In Pongo pygmaeus (Bornean orangutan), this protein is Taste receptor type 2 member 14 (TAS2R14).